The following is a 581-amino-acid chain: Arginine--tRNA ligase (581 aa).

A 'HIGH' region motif is present at residues 126-136 (PNLAKEMHVGH).

This sequence belongs to the class-I aminoacyl-tRNA synthetase family. In terms of assembly, monomer.

It localises to the cytoplasm. It carries out the reaction tRNA(Arg) + L-arginine + ATP = L-arginyl-tRNA(Arg) + AMP + diphosphate. This is Arginine--tRNA ligase from Shewanella halifaxensis (strain HAW-EB4).